The sequence spans 334 residues: DNA-directed RNA polymerase subunit alpha (334 aa).

The segment at 1–234 (MQRSVHELLT…QQLAVFVDFD (234 aa)) is alpha N-terminal domain (alpha-NTD). Positions 248 to 334 (IDPILLRPVD…LRGDDRVLGG (87 aa)) are alpha C-terminal domain (alpha-CTD).

The protein belongs to the RNA polymerase alpha chain family. In terms of assembly, homodimer. The RNAP catalytic core consists of 2 alpha, 1 beta, 1 beta' and 1 omega subunit. When a sigma factor is associated with the core the holoenzyme is formed, which can initiate transcription.

The catalysed reaction is RNA(n) + a ribonucleoside 5'-triphosphate = RNA(n+1) + diphosphate. Functionally, DNA-dependent RNA polymerase catalyzes the transcription of DNA into RNA using the four ribonucleoside triphosphates as substrates. This chain is DNA-directed RNA polymerase subunit alpha, found in Marinobacter nauticus (strain ATCC 700491 / DSM 11845 / VT8) (Marinobacter aquaeolei).